Reading from the N-terminus, the 370-residue chain is Germination protease (370 aa).

The propeptide occupies 1–15 (MEKELDLSQYSVRTD).

It belongs to the peptidase A25 family. Homotetramer. Post-translationally, autoproteolytically processed. The inactive tetrameric zymogen termed p46 autoprocesses to a smaller form termed p41, which is active only during spore germination.

It catalyses the reaction Endopeptidase action with P4 Glu or Asp, P1 preferably Glu &gt; Asp, P1' hydrophobic and P2' Ala.. In terms of biological role, initiates the rapid degradation of small, acid-soluble proteins during spore germination. This is Germination protease (gpr) from Priestia megaterium (strain ATCC 12872 / QMB1551) (Bacillus megaterium).